Here is a 107-residue protein sequence, read N- to C-terminus: Latency-related protein 2 (107 aa).

Pro residues predominate over residues M1–T44. The tract at residues M1–T63 is disordered. Tandem repeats lie at residues A2 to H17, A18 to H33, and A34 to H49. A 3 X 17 AA tandem repeats region spans residues A2–H49. The span at P46–R58 shows a compositional bias: basic residues.

This Homo sapiens (Human) protein is Latency-related protein 2.